We begin with the raw amino-acid sequence, 650 residues long: Flap endonuclease 1 (650 aa).

The N-domain stretch occupies residues 1-106 (MGIKGLTKFI…SELEKRGEKR (106 aa)). Position 34 (Asp-34) interacts with Mg(2+). Arg-47 and Arg-72 together coordinate DNA. 5 residues coordinate Mg(2+): Asp-88, Glu-160, Glu-162, Asp-181, and Asp-183. An I-domain region spans residues 124–266 (EIKKQSGRTV…KTAYNLIKEY (143 aa)). A DNA-binding site is contributed by Glu-160. DNA-binding residues include Gly-244 and Asp-246. Residue Asp-246 coordinates Mg(2+). Residues 349-357 (TQRRLDNFF) form an interaction with PCNA region. A disordered region spans residues 371 to 592 (ETKKEQTLPA…NSYNNIKNNN (222 aa)). 3 stretches are compositionally biased toward basic and acidic residues: residues 413 to 469 (MKEE…KKSL), 478 to 502 (DSDK…EKIN), and 511 to 524 (DHSR…KDNI). Positions 525 to 562 (SDINNNNNNNNNNSSSNNNNISNNHFNSVSSNSTFNSS) are enriched in low complexity. Residues 565–581 (LKSEDTLKSNSPLKEDS) are compositionally biased toward basic and acidic residues. Positions 582–592 (PNSYNNIKNNN) are enriched in low complexity.

Belongs to the XPG/RAD2 endonuclease family. FEN1 subfamily. Interacts with PCNA1 and PCNA2. Three molecules of FEN1 bind to one PCNA trimer with each molecule binding to one PCNA monomer. PCNA stimulates the nuclease activity without altering cleavage specificity. It depends on Mg(2+) as a cofactor. In terms of processing, phosphorylated. Phosphorylation upon DNA damage induces relocalization to the nuclear plasma.

The protein resides in the nucleus. The protein localises to the nucleolus. Its subcellular location is the nucleoplasm. It localises to the mitochondrion. With respect to regulation, inhibited by monovalent metal ions. In terms of biological role, structure-specific nuclease with 5'-flap endonuclease and 5'-3' exonuclease activities involved in DNA replication and repair. During DNA replication, cleaves the 5'-overhanging flap structure that is generated by displacement synthesis when DNA polymerase encounters the 5'-end of a downstream Okazaki fragment. It enters the flap from the 5'-end and then tracks to cleave the flap base, leaving a nick for ligation. Also involved in the long patch base excision repair (LP-BER) pathway, by cleaving within the apurinic/apyrimidinic (AP) site-terminated flap. Acts as a genome stabilization factor that prevents flaps from equilibrating into structures that lead to duplications and deletions. Also possesses 5'-3' exonuclease activity on nicked or gapped double-stranded DNA, and exhibits RNase H activity. Also involved in replication and repair of rDNA and in repairing mitochondrial DNA. The chain is Flap endonuclease 1 from Plasmodium falciparum.